A 596-amino-acid chain; its full sequence is Dihydroxy-acid dehydratase pbrD, mitochondrial (596 aa).

A mitochondrion-targeting transit peptide spans 1 to 18 (MATSSIRSRALGLSRRAR). Cysteine 84 lines the [2Fe-2S] cluster pocket. Residue aspartate 116 coordinates Mg(2+). Cysteine 157 contacts [2Fe-2S] cluster. Residue aspartate 158 participates in Mg(2+) binding. Cysteine 230 lines the [2Fe-2S] cluster pocket. Glutamate 483 contributes to the Mg(2+) binding site. Catalysis depends on serine 509, which acts as the Proton acceptor.

This sequence belongs to the IlvD/Edd family. [2Fe-2S] cluster is required as a cofactor. Mg(2+) serves as cofactor.

It localises to the mitochondrion. It catalyses the reaction (2R)-2,3-dihydroxy-3-methylbutanoate = 3-methyl-2-oxobutanoate + H2O. It carries out the reaction (2R,3R)-2,3-dihydroxy-3-methylpentanoate = (S)-3-methyl-2-oxopentanoate + H2O. Its pathway is amino-acid biosynthesis; L-isoleucine biosynthesis; L-isoleucine from 2-oxobutanoate: step 3/4. It functions in the pathway amino-acid biosynthesis; L-valine biosynthesis; L-valine from pyruvate: step 3/4. Its activity is regulated as follows. DHAD activity is not inhibited by the dihydroxyacid dehydratase inhibitor aspterric acid (AA). In terms of biological role, dihydroxyacid dehydratase; part of the gene cluster that mediates the biosynthesis of the sesquiterpenoid aspterric acid (AA), an inhibitor of dihydroxy-acid dehydratase (DHAD) effective as an herbicide. Performs the third step in the common pathway leading to biosynthesis of branched-chain amino acids. Catalyzes the dehydration of (2R,3R)-2,3-dihydroxy-3-methylpentanoate (2,3-dihydroxy-3-methylvalerate) into 2-oxo-3-methylpentanoate (2-oxo-3-methylvalerate) and of (2R)-2,3-dihydroxy-3-methylbutanoate (2,3-dihydroxyisovalerate) into 2-oxo-3-methylbutanoate (2-oxoisovalerate), the penultimate precursor to L-isoleucine and L-valine, respectively. PbrD confers self-resistance in the presence of the dihydroxyacid dehydratase inhibitor aspterric acid (AA) produced by the ast cluster. The protein is Dihydroxy-acid dehydratase pbrD, mitochondrial of Penicillium brasilianum.